The primary structure comprises 101 residues: NAD(P)H-quinone oxidoreductase subunit 4L, chloroplastic (101 aa).

A run of 3 helical transmembrane segments spans residues 2–22, 32–52, and 61–81; these read MFEL…YGLI, ICLE…SDLF, and IFAI…LSIL.

The protein belongs to the complex I subunit 4L family. NDH is composed of at least 16 different subunits, 5 of which are encoded in the nucleus.

It is found in the plastid. The protein resides in the chloroplast thylakoid membrane. It catalyses the reaction a plastoquinone + NADH + (n+1) H(+)(in) = a plastoquinol + NAD(+) + n H(+)(out). The enzyme catalyses a plastoquinone + NADPH + (n+1) H(+)(in) = a plastoquinol + NADP(+) + n H(+)(out). In terms of biological role, NDH shuttles electrons from NAD(P)H:plastoquinone, via FMN and iron-sulfur (Fe-S) centers, to quinones in the photosynthetic chain and possibly in a chloroplast respiratory chain. The immediate electron acceptor for the enzyme in this species is believed to be plastoquinone. Couples the redox reaction to proton translocation, and thus conserves the redox energy in a proton gradient. The protein is NAD(P)H-quinone oxidoreductase subunit 4L, chloroplastic of Lolium perenne (Perennial ryegrass).